Here is a 585-residue protein sequence, read N- to C-terminus: Urease subunit alpha (585 aa).

Positions 132 to 585 (GGIDTHIHFI…LPMAQRYFLF (454 aa)) constitute a Urease domain. Residues histidine 137, histidine 139, and lysine 220 each coordinate Ni(2+). The residue at position 220 (lysine 220) is an N6-carboxylysine. Residue histidine 222 participates in substrate binding. 2 residues coordinate Ni(2+): histidine 249 and histidine 275. Catalysis depends on histidine 323, which acts as the Proton donor. Aspartate 363 provides a ligand contact to Ni(2+).

The protein belongs to the metallo-dependent hydrolases superfamily. Urease alpha subunit family. In terms of assembly, heterotrimer of UreA (gamma), UreB (beta) and UreC (alpha) subunits. Three heterotrimers associate to form the active enzyme. Ni cation serves as cofactor. Post-translationally, carboxylation allows a single lysine to coordinate two nickel ions.

It localises to the cytoplasm. The enzyme catalyses urea + 2 H2O + H(+) = hydrogencarbonate + 2 NH4(+). It participates in nitrogen metabolism; urea degradation; CO(2) and NH(3) from urea (urease route): step 1/1. This chain is Urease subunit alpha, found in Pseudarthrobacter chlorophenolicus (strain ATCC 700700 / DSM 12829 / CIP 107037 / JCM 12360 / KCTC 9906 / NCIMB 13794 / A6) (Arthrobacter chlorophenolicus).